A 130-amino-acid polypeptide reads, in one-letter code: Histone H2A type 4 (130 aa).

Ser-2 is modified (phosphoserine; by RPS6KA5). At Arg-4 the chain carries Citrulline; alternate. The residue at position 4 (Arg-4) is a Symmetric dimethylarginine; by PRMT5; alternate. Residues Lys-6 and Lys-10 each carry the N6-(2-hydroxyisobutyryl)lysine; alternate modification. 2 positions are modified to N6-acetyllysine; alternate: Lys-6 and Lys-10. At Lys-10 the chain carries N6-lactoyllysine; alternate. 3 positions are modified to N6-(2-hydroxyisobutyryl)lysine: Lys-75, Lys-76, and Lys-96. Lys-96 is modified (N6-glutaryllysine; alternate). Gln-105 carries the N5-methylglutamine modification. Lys-119 is modified (N6-(2-hydroxyisobutyryl)lysine; alternate). N6-glutaryllysine; alternate occurs at positions 119 and 120. Lys-119 is modified (N6-crotonyllysine; alternate). An N6-crotonyllysine modification is found at Lys-120. At Thr-121 the chain carries Phosphothreonine; by DCAF1. Residue Lys-126 is modified to N6-glutaryllysine; alternate. An N6-crotonyllysine; alternate modification is found at Lys-126. A [ST]-Q motif motif is present at residues 127–128; it reads SQ.

Belongs to the histone H2A family. As to quaternary structure, the nucleosome is a histone octamer containing two molecules each of H2A, H2B, H3 and H4 assembled in one H3-H4 heterotetramer and two H2A-H2B heterodimers. The octamer wraps approximately 147 bp of DNA. Deiminated on Arg-4 in granulocytes upon calcium entry. Post-translationally, monoubiquitination of Lys-120 (H2AK119Ub) by RING1, TRIM37 and RNF2/RING2 complex gives a specific tag for epigenetic transcriptional repression and participates in X chromosome inactivation of female mammals. It is involved in the initiation of both imprinted and random X inactivation. Ubiquitinated H2A is enriched in inactive X chromosome chromatin. Ubiquitination of H2A functions downstream of methylation of 'Lys-27' of histone H3 (H3K27me). H2AK119Ub by RNF2/RING2 can also be induced by ultraviolet and may be involved in DNA repair. Following DNA double-strand breaks (DSBs), it is ubiquitinated through 'Lys-63' linkage of ubiquitin moieties by the E2 ligase UBE2N and the E3 ligases RNF8 and RNF168, leading to the recruitment of repair proteins to sites of DNA damage. Ubiquitination at Lys-14 and Lys-16 (H2AK13Ub and H2AK15Ub, respectively) in response to DNA damage is initiated by RNF168 that mediates monoubiquitination at these 2 sites, and 'Lys-63'-linked ubiquitin are then conjugated to monoubiquitin; RNF8 is able to extend 'Lys-63'-linked ubiquitin chains in vitro. H2AK119Ub and ionizing radiation-induced 'Lys-63'-linked ubiquitination (H2AK13Ub and H2AK15Ub) are distinct events. In terms of processing, phosphorylation on Ser-2 (H2AS1ph) is enhanced during mitosis. Phosphorylation on Ser-2 by RPS6KA5/MSK1 directly represses transcription. Acetylation of H3 inhibits Ser-2 phosphorylation by RPS6KA5/MSK1. Phosphorylation at Thr-121 (H2AT120ph) by DCAF1 is present in the regulatory region of many tumor suppresor genes and down-regulates their transcription. Symmetric dimethylation on Arg-4 by the PRDM1/PRMT5 complex may play a crucial role in the germ-cell lineage. Post-translationally, glutamine methylation at Gln-105 (H2AQ104me) by FBL is specifically dedicated to polymerase I. It is present at 35S ribosomal DNA locus and impairs binding of the FACT complex. In terms of processing, crotonylation (Kcr) is specifically present in male germ cells and marks testis-specific genes in post-meiotic cells, including X-linked genes that escape sex chromosome inactivation in haploid cells. Crotonylation marks active promoters and enhancers and confers resistance to transcriptional repressors. It is also associated with post-meiotically activated genes on autosomes. Lactylated in macrophages by EP300/P300 by using lactoyl-CoA directly derived from endogenous or exogenous lactate, leading to stimulates gene transcription. As to expression, testis.

The protein localises to the nucleus. Its subcellular location is the chromosome. Its function is as follows. Core component of nucleosome. Nucleosomes wrap and compact DNA into chromatin, limiting DNA accessibility to the cellular machineries which require DNA as a template. Histones thereby play a central role in transcription regulation, DNA repair, DNA replication and chromosomal stability. DNA accessibility is regulated via a complex set of post-translational modifications of histones, also called histone code, and nucleosome remodeling. The protein is Histone H2A type 4 of Rattus norvegicus (Rat).